Here is a 1365-residue protein sequence, read N- to C-terminus: DNA-directed RNA polymerase subunit beta' (1365 aa).

4 residues coordinate Zn(2+): Cys249, Cys316, Cys323, and Cys326.

Belongs to the RNA polymerase beta' chain family. RpoC2 subfamily. As to quaternary structure, in cyanobacteria the RNAP catalytic core is composed of 2 alpha, 1 beta, 1 beta', 1 gamma and 1 omega subunit. When a sigma factor is associated with the core the holoenzyme is formed, which can initiate transcription. The cofactor is Zn(2+).

It carries out the reaction RNA(n) + a ribonucleoside 5'-triphosphate = RNA(n+1) + diphosphate. Functionally, DNA-dependent RNA polymerase catalyzes the transcription of DNA into RNA using the four ribonucleoside triphosphates as substrates. The chain is DNA-directed RNA polymerase subunit beta' from Synechococcus sp. (strain CC9311).